The primary structure comprises 123 residues: Holo-[acyl-carrier-protein] synthase (123 aa).

Mg(2+) is bound by residues D9 and E57.

Belongs to the P-Pant transferase superfamily. AcpS family. Mg(2+) is required as a cofactor.

It is found in the cytoplasm. The enzyme catalyses apo-[ACP] + CoA = holo-[ACP] + adenosine 3',5'-bisphosphate + H(+). Functionally, transfers the 4'-phosphopantetheine moiety from coenzyme A to a Ser of acyl-carrier-protein. The polypeptide is Holo-[acyl-carrier-protein] synthase (Streptomyces avermitilis (strain ATCC 31267 / DSM 46492 / JCM 5070 / NBRC 14893 / NCIMB 12804 / NRRL 8165 / MA-4680)).